Consider the following 1299-residue polypeptide: MPIVMARDLEETASSSEDEEVISQEDHPCIMWTGGCRRIPVLVFHADAILTKDNNIRVIGERYHLSYKIVRTDSRLVRSILTAHGFHEVHPSSTDYNLMWTGSHLKPFLLRTLSEAQKVNHFPRSYELTRKDRLYKNIIRMQHTHGFKAFHILPQTFLLPAEYAEFCNSYSKDRGPWIVKPVASSRGRGVYLINNPNQISLEENILVSRYINNPLLIDDFKFDVRLYVLVTSYDPLVIYLYEEGLARFATVRYDQGAKNIRNQFMHLTNYSVNKKSGDYVSCDDPEVEDYGNKWSMSAMLRYLKQEGRDTTALMAHVEDLIIKTIISAELAIATACKTFVPHRSSCFELYGFDVLIDSTLKPWLLEVNLSPSLACDAPLDLKIKASMISDMFTVVGFVCQDPAQRASTRPIYPTFESSRRNPFQKPQRCRPLSASDAEMKNLVGSAREKGPGKLGGSVLGLSMEEIKVLRRVKEENDRRGGFIRIFPTSETWEIYGSYLEHKTSMNYMLATRLFQDRGNPRRSLLTGRTRMTADGAPELKIESLNSKAKLHAALYERKLLSLEVRKRRRRSSRLRAMRPKYPVITQPAEMNVKTETESEEEEEVALDNEEEEQEASQEESAGFLRENQAKYTPSLTALVENTPKEHSMKVREWNNKGGHCCKLETQELEPKFNLVQILQDNGNLSKVQARIAFSAYLQHVQIRLMKDSGGQTFSASWAAKEDEQMELVVRFLKRASNNLQHSLRMVLPSRRLALLERRRILAHQLGDFIIVYNKETEQMAEKKSKKKVEEEEEDGVNMENFQEFIRQASEAELEEVLTFYTQKNKSASVFLGTHSKSSKNNNSYSDSGAKGDHPETIMEEVKIKPPKQQQTTEIHSDKLSRFTTSAEKEAKLVYSNSSSTPFSGPTATLQKIPNTHLSSVTTSDLSPGPGHHSSLSQIPSAIPSMPHQPTVLLNTVSASASPCLHTGTQNIPNPAGLPRCRSGSHTIGPFSSFQSAAHIYSQKLSRPSSAKAAGSCYLNKHHSGIAKTQKEGEDASSYSKRYNQSMVTAELQRLAEKQAARQYSPSSHINLLTQQVTNLNLATGIINRSSASTPPTLRPIISPSGPTWSTQSDPQAPENHSSPPGSRSLQTGVFAWEGEVENNVYSKATGVVPQHKYHPTAGSYQLHFALQQLEQQKLQSRQLLDQSRARHQAIFGSQTLPNSNLWTMNNGAGCRISSATASGQKPTTLPQKVVPPPSSCASLVPKPPPNHKQVLRRATSQRASKGSSAEGQLNGLQSSLNPAAFVPITSSTDPAHTKI.

In terms of domain architecture, TTL spans 62 to 407; that stretch reads RYHLSYKIVR…VCQDPAQRAS (346 aa). ATP-binding positions include lysine 180, 186-187, 208-211, and 221-223; these read RG, SRYI, and KFD. Position 186 (arginine 186) interacts with a protein. Arginine 247 is a binding site for L-glutamate. 268–269 is a binding site for ATP; sequence TN. L-glutamate contacts are provided by tyrosine 270, serine 271, and lysine 293. 3 residues coordinate Mg(2+): aspartate 353, glutamate 366, and asparagine 368. Residues 378–488 are c-MTBD region; the sequence is PLDLKIKASM…RGGFIRIFPT (111 aa). Lysine 384 lines the L-glutamate pocket. Disordered stretches follow at residues 589–626, 832–853, 918–941, 1088–1130, and 1217–1275; these read EMNV…FLRE, GTHS…KGDH, SSVT…IPSA, RSSA…RSLQ, and SSAT…QLNG. Positions 597 to 617 are enriched in acidic residues; the sequence is ESEEEEEVALDNEEEEQEASQ. Positions 838-847 are enriched in low complexity; that stretch reads SKNNNSYSDS. 3 stretches are compositionally biased toward polar residues: residues 1104 to 1130, 1217 to 1230, and 1258 to 1275; these read SGPT…RSLQ, SSAT…TTLP, and ATSQ…QLNG.

This sequence belongs to the tubulin--tyrosine ligase family. In terms of assembly, interacts with the transcriptional coactivators NCOA1/SRC-1 and NCOA2/TIF2. It depends on Mg(2+) as a cofactor.

It localises to the cell projection. The protein resides in the cilium. Its subcellular location is the cytoplasm. The protein localises to the cytoskeleton. It is found in the cilium basal body. It localises to the nucleus. The catalysed reaction is L-glutamyl-[protein] + L-glutamate + ATP = gamma-L-glutamyl-L-glutamyl-[protein] + ADP + phosphate + H(+). It catalyses the reaction (L-glutamyl)(n)-gamma-L-glutamyl-L-glutamyl-[protein] + L-glutamate + ATP = (L-glutamyl)(n+1)-gamma-L-glutamyl-L-glutamyl-[protein] + ADP + phosphate + H(+). Its function is as follows. Polyglutamylase which modifies tubulin, generating polyglutamate side chains on the gamma-carboxyl group of specific glutamate residues within the C-terminal tail of tubulin. Preferentially mediates ATP-dependent initiation step of the polyglutamylation reaction over the elongation step. Preferentially modifies the alpha-tubulin tail over a beta-tail. Required for CCSAP localization to both polyglutamylated spindle and cilia microtubules. Increases the effects of transcriptional coactivator NCOA2/TIF2 in glucocorticoid receptor-mediated repression and induction and in androgen receptor-mediated induction. This is Tubulin polyglutamylase TTLL5 (TTLL5) from Pongo abelii (Sumatran orangutan).